Here is a 465-residue protein sequence, read N- to C-terminus: tRNA-2-methylthio-N(6)-dimethylallyladenosine synthase (465 aa).

Residues 5–125 form the MTTase N-terminal domain; it reads RKLHIKSFGC…LPELLEKARR (121 aa). [4Fe-4S] cluster-binding residues include C14, C50, C88, C166, C170, and C173. Residues 152-382 form the Radical SAM core domain; the sequence is RARGVSAFVT…QLQGLIDSQQ (231 aa). The TRAM domain maps to 387–449; it reads RASIGTTVDV…RYSLIGELVK (63 aa).

It belongs to the methylthiotransferase family. MiaB subfamily. Monomer. [4Fe-4S] cluster serves as cofactor.

The protein localises to the cytoplasm. The enzyme catalyses N(6)-dimethylallyladenosine(37) in tRNA + (sulfur carrier)-SH + AH2 + 2 S-adenosyl-L-methionine = 2-methylsulfanyl-N(6)-dimethylallyladenosine(37) in tRNA + (sulfur carrier)-H + 5'-deoxyadenosine + L-methionine + A + S-adenosyl-L-homocysteine + 2 H(+). Its function is as follows. Catalyzes the methylthiolation of N6-(dimethylallyl)adenosine (i(6)A), leading to the formation of 2-methylthio-N6-(dimethylallyl)adenosine (ms(2)i(6)A) at position 37 in tRNAs that read codons beginning with uridine. This Rhodopseudomonas palustris (strain BisA53) protein is tRNA-2-methylthio-N(6)-dimethylallyladenosine synthase.